The chain runs to 353 residues: Photosystem II protein D1 (353 aa).

Thr2 bears the N-acetylthreonine mark. Residue Thr2 is modified to Phosphothreonine. Helical transmembrane passes span 29–46, 118–133, and 142–156; these read YIGWFGVLMIPTLLTATS, HFLLGVACYMGREWEL, and WIAVAYSAPVAAATA. His118 is a binding site for chlorophyll a. Tyr126 provides a ligand contact to pheophytin a. [CaMn4O5] cluster contacts are provided by Asp170 and Glu189. A helical membrane pass occupies residues 197-218; it reads FHMLGVAGVFGGSLFSAMHGSL. A chlorophyll a-binding site is contributed by His198. Residues His215 and 264 to 265 each bind a quinone; that span reads SF. Fe cation is bound at residue His215. Residue His272 participates in Fe cation binding. The chain crosses the membrane as a helical span at residues 274 to 288; it reads FLAAWPVVGIWFTAL. [CaMn4O5] cluster is bound by residues His332, Glu333, Asp342, and Ala344. A propeptide spanning residues 345 to 353 is cleaved from the precursor; the sequence is GVEVPSTNG.

Belongs to the reaction center PufL/M/PsbA/D family. PSII is composed of 1 copy each of membrane proteins PsbA, PsbB, PsbC, PsbD, PsbE, PsbF, PsbH, PsbI, PsbJ, PsbK, PsbL, PsbM, PsbT, PsbX, PsbY, PsbZ, Psb30/Ycf12, at least 3 peripheral proteins of the oxygen-evolving complex and a large number of cofactors. It forms dimeric complexes. It depends on The D1/D2 heterodimer binds P680, chlorophylls that are the primary electron donor of PSII, and subsequent electron acceptors. It shares a non-heme iron and each subunit binds pheophytin, quinone, additional chlorophylls, carotenoids and lipids. D1 provides most of the ligands for the Mn4-Ca-O5 cluster of the oxygen-evolving complex (OEC). There is also a Cl(-1) ion associated with D1 and D2, which is required for oxygen evolution. The PSII complex binds additional chlorophylls, carotenoids and specific lipids. as a cofactor. Tyr-161 forms a radical intermediate that is referred to as redox-active TyrZ, YZ or Y-Z. Post-translationally, C-terminally processed by CTPA; processing is essential to allow assembly of the oxygen-evolving complex and thus photosynthetic growth.

It localises to the plastid. It is found in the chloroplast thylakoid membrane. It carries out the reaction 2 a plastoquinone + 4 hnu + 2 H2O = 2 a plastoquinol + O2. In terms of biological role, photosystem II (PSII) is a light-driven water:plastoquinone oxidoreductase that uses light energy to abstract electrons from H(2)O, generating O(2) and a proton gradient subsequently used for ATP formation. It consists of a core antenna complex that captures photons, and an electron transfer chain that converts photonic excitation into a charge separation. The D1/D2 (PsbA/PsbD) reaction center heterodimer binds P680, the primary electron donor of PSII as well as several subsequent electron acceptors. In Morus indica (Mulberry), this protein is Photosystem II protein D1.